A 78-amino-acid polypeptide reads, in one-letter code: Mitotic-spindle organizing protein 1 (78 aa).

N-acetylalanine is present on Ala2.

This sequence belongs to the MOZART1 family. As to quaternary structure, associates with the gamma-tubulin ring complex (gTuRC) consisting of TUBGCP2, TUBGCP3, TUBGCP4, TUBGCP5 and TUBGCP6 and gamma-tubulin TUBG1 or TUBG2; within the complex, interacts with TUBGCP3 and TUBGCP6 to form a luminal bridge with actin that stabilizes the initial structure during complex assembly. Interacts with TUBG1.

Its subcellular location is the cytoplasm. It localises to the cytoskeleton. The protein localises to the microtubule organizing center. It is found in the centrosome. The protein resides in the spindle. Its function is as follows. Required for the recruitment and the assembly of the gamma-tubulin ring complex (gTuRC) at the centrosome. The gTuRC regulates the minus-end nucleation of alpha-beta tubulin heterodimers that grow into microtubule protafilaments, a critical step in centrosome duplication and spindle formation. The chain is Mitotic-spindle organizing protein 1 (Mzt1) from Mus musculus (Mouse).